The sequence spans 627 residues: E3 ubiquitin-protein ligase DTX1 (627 aa).

WWE domains follow at residues 14-94 (GLGF…PVRR) and 95-171 (NFYD…RLRR). 3 disordered regions span residues 222–254 (QRRKAPIAPAAPPAPPPPPPPLPPGGPPGALVV), 269–327 (PATG…ALPV), and 368–398 (PPVSKSDVKPVPGVPGVCRKTKKKHLKKSKN). 2 stretches are compositionally biased toward pro residues: residues 230–248 (PAAPPAPPPPPPPLPPGGP) and 275–287 (EPAPPPGVPPRSP). The SH3-binding signature appears at 240-243 (PPPL). The span at 296-314 (PGQNNLSRPGPQRSTSVSA) shows a compositional bias: polar residues. Residues 386–396 (RKTKKKHLKKS) are compositionally biased toward basic residues. The RING-type zinc finger occupies 418 to 479 (CTICMERLVT…DGSLQCPTCK (62 aa)).

Belongs to the Deltex family. As to quaternary structure, homodimer. May form a heterodimer with other members of the Deltex family. Interacts with NOTCH1 via its N-terminal region and EIF3F, the interaction is required for NOTCH1 deubiquitination. Interacts with EP300. Forms a heterodimer with BBAP; the heterodimerization leading to an increase of in vitro ubiquitin ligase activity. Interacts with ITCH. Post-translationally, ubiquitinated; undergoes 'Lys-29'-linked polyubiquitination catalyzed by ITCH. Predominantly expressed in the brain and testis. Weakly expressed in the thymus, spleen and ovary. Predominantly expressed in regions containing post-mitotic differentiating neurons.

The protein localises to the cytoplasm. The protein resides in the nucleus. It carries out the reaction S-ubiquitinyl-[E2 ubiquitin-conjugating enzyme]-L-cysteine + [acceptor protein]-L-lysine = [E2 ubiquitin-conjugating enzyme]-L-cysteine + N(6)-ubiquitinyl-[acceptor protein]-L-lysine.. It participates in protein modification; protein ubiquitination. Functionally, regulator of Notch signaling, a signaling pathway involved in cell-cell communications that regulates a broad spectrum of cell-fate determinations. Mainly acts as a positive regulator of Notch, but it also acts as a negative regulator, depending on the developmental and cell context. Mediates the antineural activity of Notch, possibly by inhibiting the transcriptional activation mediated by MATCH1. Involved in neurogenesis, lymphogenesis and myogenesis, and may also be involved in MZB (Marginal zone B) cell differentiation. Promotes B-cell development at the expense of T-cell development, suggesting that it can antagonize NOTCH1. Functions as an ubiquitin ligase protein in vivo, mediating ubiquitination and promoting degradation of MEKK1, suggesting that it may regulate the Notch pathway via some ubiquitin ligase activity. The polypeptide is E3 ubiquitin-protein ligase DTX1 (Dtx1) (Mus musculus (Mouse)).